Consider the following 469-residue polypeptide: Probable Xaa-Pro aminopeptidase PEPP (469 aa).

Mn(2+) is bound by residues Asp-264, Asp-275, Glu-398, and Glu-438.

The protein belongs to the peptidase M24B family. Requires Mn(2+) as cofactor.

The catalysed reaction is Release of any N-terminal amino acid, including proline, that is linked to proline, even from a dipeptide or tripeptide.. Catalyzes the removal of a penultimate prolyl residue from the N-termini of peptides. This is Probable Xaa-Pro aminopeptidase PEPP (PEPP) from Ajellomyces capsulatus (strain H143) (Darling's disease fungus).